A 237-amino-acid polypeptide reads, in one-letter code: CD99 antigen-like protein 2 (237 aa).

A signal peptide spans 1 to 25 (MVARLTAFLVCLVFSLATLVQRGYG). At 26–161 (DTDGFNLEDA…PGSGISTETG (136 aa)) the chain is on the extracellular side. The interval 47–157 (DHFSTTTRRP…SNDDPGSGIS (111 aa)) is disordered. Composition is skewed to low complexity over residues 51-66 (TTTR…ANPA) and 74-84 (TTTTRRPGTTR). Residues 102-111 (DDRNDLDGPK) show a composition bias toward basic and acidic residues. Ser-154 carries an O-linked (Xyl...) (chondroitin sulfate) serine glycan. A helical membrane pass occupies residues 162-182 (TIAGVASALAMALIGAVSSYI). Residues 183-237 (SYQQKKFCFSIQQGLNADYVKGENLEAVVCEEPQVTYSKQETQSAEPPPPEPPRI) are Cytoplasmic-facing. Residues 218-227 (TYSKQETQSA) show a composition bias toward polar residues. A disordered region spans residues 218–237 (TYSKQETQSAEPPPPEPPRI). Positions 228–237 (EPPPPEPPRI) are enriched in pro residues.

The protein belongs to the CD99 family. Post-translationally, O-glycosylated. Highly expressed in the nervous system, including brain, dentate nucleus of hippocampus, granular and Purkinje cells of cerebellum, brain stem nucleus and choroid plexus. Expressed in peripheral blood T- and B-cells and neutrophils (at protein level). Almost undetectable in bone marrow-derived neutrophils (at protein level). Also expressed in thymocytes (at protein level) with higher expression in cortical thymocytes than in medullary thymocytes. Expressed at high levels in testis (mostly in germ cells and Sertoli cells) and ovary (mostly in granulosa cells). Expressed in lung, heart, kidney and liver (at protein level); however, expression in heart, kidney and liver seems restricted to endothelial cells (at protein level). Highly expressed in endothelial cells and to a lower level in vascular smooth muscle cells (at protein level). Low expression in spleen.

The protein localises to the cell membrane. It localises to the cell junction. The protein resides in the secreted. Plays a role in a late step of leukocyte extravasation helping cells to overcome the endothelial basement membrane. Acts at the same site as, but independently of, PECAM1. Homophilic adhesion molecule, but these interactions may not be required for cell aggregation. The chain is CD99 antigen-like protein 2 (Cd99l2) from Mus musculus (Mouse).